A 121-amino-acid chain; its full sequence is uncharacterized protein (121 aa).

Positions 43-86 (LKECSSHVAAFADCSKDKYISVVWECRELQQLMKNCLVEYTTSE) constitute a CHCH domain. 2 consecutive short sequence motifs (cx9C motif) follow at residues 46-56 (CSSHVAAFADC) and 68-78 (CRELQQLMKNC). Cystine bridges form between Cys-46–Cys-78 and Cys-56–Cys-68.

The protein belongs to the CMC family.

This is an uncharacterized protein from Dictyostelium discoideum (Social amoeba).